Here is a 144-residue protein sequence, read N- to C-terminus: Transcription antitermination protein NusB (144 aa).

It belongs to the NusB family.

Involved in transcription antitermination. Required for transcription of ribosomal RNA (rRNA) genes. Binds specifically to the boxA antiterminator sequence of the ribosomal RNA (rrn) operons. This Dictyoglomus turgidum (strain DSM 6724 / Z-1310) protein is Transcription antitermination protein NusB.